Consider the following 107-residue polypeptide: CLAVATA3/ESR (CLE)-related protein 13 (107 aa).

An N-terminal signal peptide occupies residues 1–25; it reads MATTRVSHVLGFLLWISLLIFVSIG. N-linked (GlcNAc...) asparagine glycosylation is present at asparagine 29. Residues 79–107 form a disordered region; the sequence is ALPAGGSEIDPRYGVEKRLVPSGPNPLHH. The segment covering 87–97 has biased composition (basic and acidic residues); sequence IDPRYGVEKRL. 2 positions are modified to hydroxyproline: proline 99 and proline 102. Proline 102 is a glycosylation site (O-linked (Ara...) hydroxyproline).

Belongs to the CLV3/ESR signal peptide family. In terms of processing, the O-glycosylation (arabinosylation) of the hydroxyproline Pro-102 enhances binding affinity of the CLE13p peptide for its receptor. In terms of tissue distribution, mostly expressed in seedlings, roots, flowers, stems and apex, and, to a lower extent, in leaves and siliques.

It is found in the secreted. The protein resides in the extracellular space. In terms of biological role, extracellular signal peptide that regulates cell fate. Represses root apical meristem maintenance. Regulates the transition of protophloem cells from proliferation to differentiation, thus impinging on postembryonic growth capacity of the root meristem; this signaling pathway requires CRN and CLV2. This chain is CLAVATA3/ESR (CLE)-related protein 13, found in Arabidopsis thaliana (Mouse-ear cress).